The following is a 164-amino-acid chain: Small ribosomal subunit protein uS9 (164 aa).

This sequence belongs to the universal ribosomal protein uS9 family.

The protein is Small ribosomal subunit protein uS9 of Rickettsia bellii (strain OSU 85-389).